Reading from the N-terminus, the 77-residue chain is Large ribosomal subunit protein bL28 (77 aa).

Belongs to the bacterial ribosomal protein bL28 family.

The protein is Large ribosomal subunit protein bL28 of Polaromonas naphthalenivorans (strain CJ2).